Consider the following 173-residue polypeptide: Adenine phosphoribosyltransferase (173 aa).

The protein belongs to the purine/pyrimidine phosphoribosyltransferase family. Homodimer.

The protein resides in the cytoplasm. The catalysed reaction is AMP + diphosphate = 5-phospho-alpha-D-ribose 1-diphosphate + adenine. It participates in purine metabolism; AMP biosynthesis via salvage pathway; AMP from adenine: step 1/1. Its function is as follows. Catalyzes a salvage reaction resulting in the formation of AMP, that is energically less costly than de novo synthesis. The sequence is that of Adenine phosphoribosyltransferase from Desulfitobacterium hafniense (strain Y51).